Here is a 328-residue protein sequence, read N- to C-terminus: Phenylalanine--tRNA ligase alpha subunit (328 aa).

Position 245 (glutamate 245) interacts with Mg(2+).

This sequence belongs to the class-II aminoacyl-tRNA synthetase family. Phe-tRNA synthetase alpha subunit type 1 subfamily. Tetramer of two alpha and two beta subunits. Requires Mg(2+) as cofactor.

The protein localises to the cytoplasm. It carries out the reaction tRNA(Phe) + L-phenylalanine + ATP = L-phenylalanyl-tRNA(Phe) + AMP + diphosphate + H(+). This chain is Phenylalanine--tRNA ligase alpha subunit, found in Helicobacter pylori (strain P12).